A 191-amino-acid polypeptide reads, in one-letter code: Transposon Tn1546 resolvase (191 aa).

The Resolvase/invertase-type recombinase catalytic domain occupies 2 to 138 (RKIGYIRVSS…EGIELAKKEG (137 aa)). S10 functions as the O-(5'-phospho-DNA)-serine intermediate in the catalytic mechanism. The H-T-H motif DNA-binding region spans 168–187 (VNQICEITNVSRASLYRKLS).

This sequence belongs to the site-specific recombinase resolvase family.

In terms of biological role, resolvase catalyzes the resolution (a site-specific recombination) of the cointegrated replicon to yield the final transposition products. In Enterococcus faecium (Streptococcus faecium), this protein is Transposon Tn1546 resolvase.